We begin with the raw amino-acid sequence, 140 residues long: Cytochrome c-type biogenesis protein CcmE (140 aa).

At 1 to 7 (MKRKHKR) the chain is on the cytoplasmic side. The helical; Signal-anchor for type II membrane protein transmembrane segment at 8-28 (LLFVLASFCAAGCALLFILSE) threads the bilayer. At 29 to 140 (LRESVSFFYT…TIPKALPEPK (112 aa)) the chain is on the periplasmic side. 2 residues coordinate heme: His121 and Tyr125.

This sequence belongs to the CcmE/CycJ family.

Its subcellular location is the cell inner membrane. Heme chaperone required for the biogenesis of c-type cytochromes. Transiently binds heme delivered by CcmC and transfers the heme to apo-cytochromes in a process facilitated by CcmF and CcmH. The sequence is that of Cytochrome c-type biogenesis protein CcmE from Anaplasma marginale (strain Florida).